The chain runs to 478 residues: Cysteine protease ATG4B (478 aa).

Polar residues predominate over residues 1–15 (MTSLPDRGVSSSSSD). The disordered stretch occupies residues 1–31 (MTSLPDRGVSSSSSDPLCEGNIAPCSSSSEQ). Cys-164 serves as the catalytic Nucleophile. Active-site residues include Asp-361 and His-363.

Belongs to the peptidase C54 family. As to quaternary structure, interacts with ATG8.

It localises to the cytoplasm. The enzyme catalyses [protein]-C-terminal L-amino acid-glycyl-phosphatidylethanolamide + H2O = [protein]-C-terminal L-amino acid-glycine + a 1,2-diacyl-sn-glycero-3-phosphoethanolamine. Its function is as follows. Cysteine protease that plays a key role in autophagy by mediating both proteolytic activation and delipidation of ATG8 family proteins. The protease activity is required for proteolytic activation of ATG8 family proteins: cleaves the C-terminal amino acid of ATG8 proteins to reveal a C-terminal glycine. Exposure of the glycine at the C-terminus is essential for ATG8 proteins conjugation to phosphatidylethanolamine (PE) and insertion to membranes, which is necessary for autophagy. In addition to the protease activity, also mediates delipidation of PE-conjugated ATG8 proteins. The protein is Cysteine protease ATG4B (ATG4B) of Oryza sativa subsp. japonica (Rice).